The chain runs to 1422 residues: YEATS domain-containing protein 2 (1422 aa).

A Glycyl lysine isopeptide (Lys-Gly) (interchain with G-Cter in SUMO2) cross-link involves residue Lys-9. The stretch at 47-80 forms a coiled coil; it reads KEQFALEMKNKEHEIEVIDQRLIEARRMMDKLRA. A Glycyl lysine isopeptide (Lys-Gly) (interchain with G-Cter in SUMO2) cross-link involves residue Lys-113. Residues 117–198 form a disordered region; sequence ESPSRSSSPA…KTEQRNADLT (82 aa). Residues Ser-118, Ser-120, and Ser-157 each carry the phosphoserine modification. Over residues 119 to 148 the composition is skewed to polar residues; the sequence is PSRSSSPANQRAETPSANHSESDSLSQHND. The span at 149 to 165 shows a compositional bias: basic and acidic residues; that stretch reads FLSDKDNNSNMDIEERL. Residues 166 to 176 show a composition bias toward polar residues; that stretch reads SNNMEQRPSRN. Residues 177–198 show a composition bias toward basic and acidic residues; sequence TGRDTSRITGSHKTEQRNADLT. A Glycyl lysine isopeptide (Lys-Gly) (interchain with G-Cter in SUMO2) cross-link involves residue Lys-189. A YEATS domain is found at 200 to 345; that stretch reads ETSRLFVKKT…EDCIYPQSSE (146 aa). Histone H3K27cr binding stretches follow at residues 259–261 and 282–284; these read HPS and WGE. Lys-370 participates in a covalent cross-link: Glycyl lysine isopeptide (Lys-Gly) (interchain with G-Cter in SUMO2). Thr-407 is subject to Phosphothreonine. A phosphoserine mark is found at Ser-447, Ser-463, Ser-465, Ser-471, and Ser-473. A disordered region spans residues 465–486; it reads SPISTPSPSPLPRTPTSTPVHV. Phosphothreonine is present on Thr-478. Lys-487 participates in a covalent cross-link: Glycyl lysine isopeptide (Lys-Gly) (interchain with G-Cter in SUMO2). The segment covering 513 to 535 has biased composition (polar residues); that stretch reads TTPSTGSPTNKISTASQVSQGTG. Positions 513-540 are disordered; the sequence is TTPSTGSPTNKISTASQVSQGTGSPVPK. Ser-536 carries the phosphoserine modification. Lys-552 is covalently cross-linked (Glycyl lysine isopeptide (Lys-Gly) (interchain with G-Cter in SUMO2)). Ser-575 carries the post-translational modification Phosphoserine. Residue Lys-592 forms a Glycyl lysine isopeptide (Lys-Gly) (interchain with G-Cter in SUMO2) linkage. Residue Ser-627 is modified to Phosphoserine. Glycyl lysine isopeptide (Lys-Gly) (interchain with G-Cter in SUMO2) cross-links involve residues Lys-649 and Lys-773. Positions 794 to 842 are disordered; it reads GSAASGGSGAGGGGGGGGGGGSGSGGGGSTGGGGGTAGGGTQSTAGPGG. Residues 797 to 842 show a composition bias toward gly residues; it reads ASGGSGAGGGGGGGGGGGSGSGGGGSTGGGGGTAGGGTQSTAGPGG. A Glycyl lysine isopeptide (Lys-Gly) (interchain with G-Cter in SUMO2) cross-link involves residue Lys-923. Lys-1110 is covalently cross-linked (Glycyl lysine isopeptide (Lys-Gly) (interchain with G-Cter in SUMO1); alternate). Lys-1110 participates in a covalent cross-link: Glycyl lysine isopeptide (Lys-Gly) (interchain with G-Cter in SUMO2); alternate. Lys-1130 is covalently cross-linked (Glycyl lysine isopeptide (Lys-Gly) (interchain with G-Cter in SUMO2)). At Thr-1219 the chain carries Phosphothreonine. Glycyl lysine isopeptide (Lys-Gly) (interchain with G-Cter in SUMO2) cross-links involve residues Lys-1222 and Lys-1285.

In terms of assembly, component of the ADA2A-containing complex (ATAC), composed of KAT14, KAT2A, TADA2L, TADA3L, ZZ3, MBIP, WDR5, YEATS2, SGF29 and DR1.

It localises to the nucleus. Functionally, chromatin reader component of the ATAC complex, a complex with histone acetyltransferase activity on histones H3 and H4. YEATS2 specifically recognizes and binds histone H3 crotonylated at 'Lys-27' (H3K27cr). Crotonylation marks active promoters and enhancers and confers resistance to transcriptional repressors. In Homo sapiens (Human), this protein is YEATS domain-containing protein 2.